We begin with the raw amino-acid sequence, 513 residues long: Na(+)/H(+) antiporter NhaB (513 aa).

The next 12 membrane-spanning stretches (helical) occupy residues 23–43 (LALI…PFVA), 52–72 (IFTL…LLAI), 97–117 (LLLM…LFIF), 120–140 (LLLS…AAAF), 144–164 (FLDA…FYGI), 202–222 (LMMH…VGEP), 238–258 (FFLR…LTCL), 303–323 (AIIG…VGLI), 348–368 (TESL…AVII), 391–411 (LFYI…VGTI), 447–467 (ATPN…APLI), and 475–495 (VWMA…CVEF).

It belongs to the NhaB Na(+)/H(+) (TC 2.A.34) antiporter family.

Its subcellular location is the cell inner membrane. It catalyses the reaction 2 Na(+)(in) + 3 H(+)(out) = 2 Na(+)(out) + 3 H(+)(in). Functionally, na(+)/H(+) antiporter that extrudes sodium in exchange for external protons. This chain is Na(+)/H(+) antiporter NhaB, found in Escherichia coli (strain 55989 / EAEC).